The chain runs to 1121 residues: Pleckstrin homology domain-containing family A member 7 (1121 aa).

WW domains are found at residues Asp-9–Thr-42 and Ser-54–Thr-87. The interval Pro-105–Gly-137 is disordered. Over residues Arg-115 to Thr-131 the composition is skewed to polar residues. Residues Pro-164–Gln-282 form the PH domain. The tract at residues Gln-299–Ala-514 is disordered. Composition is skewed to basic and acidic residues over residues Glu-308–Arg-356 and His-437–Ser-446. Positions Pro-460 to Lys-475 are enriched in polar residues. Residues Tyr-497–Ala-514 are compositionally biased toward basic and acidic residues. A phosphoserine mark is found at Ser-536, Ser-545, Ser-569, Ser-604, Ser-608, and Ser-612. The segment at Thr-538–Ser-696 is interaction with CTNND1. The tract at residues Glu-547–Met-632 is disordered. The span at Pro-567 to Phe-582 shows a compositional bias: pro residues. Positions Thr-589–Val-605 are enriched in basic and acidic residues. A coiled-coil region spans residues Glu-700–Phe-801. Disordered stretches follow at residues Arg-841–Pro-876 and Tyr-888–Gln-971. Phosphoserine is present on residues Ser-858, Ser-860, and Ser-867. Residues Lys-861 to Ser-871 show a composition bias toward pro residues. Thr-870 is subject to Phosphothreonine. Phosphoserine occurs at positions 871, 903, and 907. The span at Asp-933–Pro-942 shows a compositional bias: pro residues. Positions Arg-958–Leu-969 are enriched in basic and acidic residues. Residue Ser-986 is modified to Phosphoserine. Disordered stretches follow at residues Gly-1003–Gln-1028 and Arg-1082–Cys-1121. Residues Gln-1067–Thr-1094 are a coiled coil. Residues Arg-1082–Thr-1094 are compositionally biased toward basic residues.

As to quaternary structure, interacts with CAMSAP3 and CTNND1. Interacts (via WW domains) with TSPAN33 (via cytoplasmic domain) and with PDZD11; the interaction with TSPAN33 is dependent on PDZD11 being bound to PLEKHA7 and facilitates the docking of ADAM10 to zonula adherens through interaction of TSPAN33 with ADAM10.

The protein resides in the cell junction. It localises to the adherens junction. Its subcellular location is the cytoplasm. The protein localises to the cytoskeleton. It is found in the microtubule organizing center. The protein resides in the centrosome. In terms of biological role, required for zonula adherens biogenesis and maintenance. Acts via its interaction with CAMSAP3, which anchors microtubules at their minus-ends to zonula adherens, leading to the recruitment of KIFC3 kinesin to the junctional site. Mediates docking of ADAM10 to zonula adherens through a PDZD11-dependent interaction with the ADAM10-binding protein TSPAN33. The polypeptide is Pleckstrin homology domain-containing family A member 7 (PLEKHA7) (Homo sapiens (Human)).